Consider the following 119-residue polypeptide: Large ribosomal subunit protein uL18 (119 aa).

It belongs to the universal ribosomal protein uL18 family. As to quaternary structure, part of the 50S ribosomal subunit; part of the 5S rRNA/L5/L18/L25 subcomplex. Contacts the 5S and 23S rRNAs.

In terms of biological role, this is one of the proteins that bind and probably mediate the attachment of the 5S RNA into the large ribosomal subunit, where it forms part of the central protuberance. This chain is Large ribosomal subunit protein uL18, found in Chelativorans sp. (strain BNC1).